We begin with the raw amino-acid sequence, 132 residues long: Agouti-signaling protein (132 aa).

A signal peptide spans 1–22 (MDVTRLVLATLLVFLCFFAAYS). An N-linked (GlcNAc...) asparagine glycan is attached at Asn39. The segment at 60–93 (KKISRKEAEKRRSSKKEASKQKVARPRTPLSVPC) is disordered. Residues 64 to 79 (RKEAEKRRSSKKEASK) show a composition bias toward basic and acidic residues. Intrachain disulfides connect Cys93–Cys108, Cys100–Cys114, Cys107–Cys125, Cys111–Cys132, and Cys116–Cys123. Residues 93-132 (CVSTRGSCKPPAPACCHPCASCQCRFFRSACSCRVLNVNC) enclose the Agouti domain.

The protein resides in the secreted. Functionally, involved in the regulation of melanogenesis. The binding of ASP to MC1R precludes alpha-MSH initiated signaling and thus blocks production of cAMP, leading to a down-regulation of eumelanogenesis (brown/black pigment) and thus increasing synthesis of pheomelanin (yellow/red pigment). This is Agouti-signaling protein (ASIP) from Cebuella pygmaea (Pygmy marmoset).